We begin with the raw amino-acid sequence, 94 residues long: Large ribosomal subunit protein uL23 (94 aa).

Belongs to the universal ribosomal protein uL23 family. As to quaternary structure, part of the 50S ribosomal subunit. Contacts protein L29, and trigger factor when it is bound to the ribosome.

Functionally, one of the early assembly proteins it binds 23S rRNA. One of the proteins that surrounds the polypeptide exit tunnel on the outside of the ribosome. Forms the main docking site for trigger factor binding to the ribosome. In Geobacter metallireducens (strain ATCC 53774 / DSM 7210 / GS-15), this protein is Large ribosomal subunit protein uL23.